The sequence spans 266 residues: DNA damage-regulated autophagy modulator protein 2 (266 aa).

The next 6 membrane-spanning stretches (helical) occupy residues 8-28, 53-73, 88-108, 118-138, 160-180, and 207-227; these read LSFL…FSYI, KCLF…TIYV, IIKL…GLSI, FAAH…YMFV, LLLV…SSVL, and ITTA…LTYI.

Belongs to the DRAM/TMEM150 family. Expression is down-regulated in ovarian tumors (at protein level). Widely expressed with highest levels in placenta and heart. Expressed in the retina. Not detected in brain or thymus.

The protein resides in the lysosome membrane. The protein localises to the photoreceptor inner segment. It localises to the apical cell membrane. Its function is as follows. Plays a role in the initiation of autophagy. In the retina, might be involved in the process of photoreceptor cells renewal and recycling to preserve visual function. Induces apoptotic cell death when coexpressed with DRAM1. The sequence is that of DNA damage-regulated autophagy modulator protein 2 (DRAM2) from Homo sapiens (Human).